Reading from the N-terminus, the 384-residue chain is Flap endonuclease 1 (384 aa).

The N-domain stretch occupies residues 1–105; sequence MGVKGLNQLI…GELEKRLLKR (105 aa). Asp34 provides a ligand contact to Mg(2+). Residues Arg47 and Arg71 each coordinate DNA. The Mg(2+) site is built by Asp87, Glu159, Glu161, Asp180, and Asp182. Positions 123 to 254 are I-domain; it reads DMTKYQKRLV…VTAYKLIKEH (132 aa). A DNA-binding site is contributed by Glu159. Residues Gly232 and Asp234 each contribute to the DNA site. Mg(2+) is bound at residue Asp234. Residues 341–349 are interaction with PCNA; sequence IQGRLDGFF. The interval 354 to 384 is disordered; sequence KYSNTSPLGKDDKKRKTNDKKGAAAKKTKRR. A compositionally biased stretch (basic and acidic residues) spans 362–375; the sequence is GKDDKKRKTNDKKG.

The protein belongs to the XPG/RAD2 endonuclease family. FEN1 subfamily. In terms of assembly, interacts with PCNA. Three molecules of FEN1 bind to one PCNA trimer with each molecule binding to one PCNA monomer. PCNA stimulates the nuclease activity without altering cleavage specificity. The cofactor is Mg(2+). Post-translationally, phosphorylated. Phosphorylation upon DNA damage induces relocalization to the nuclear plasma.

Its subcellular location is the nucleus. The protein localises to the nucleolus. It is found in the nucleoplasm. It localises to the mitochondrion. In terms of biological role, structure-specific nuclease with 5'-flap endonuclease and 5'-3' exonuclease activities involved in DNA replication and repair. During DNA replication, cleaves the 5'-overhanging flap structure that is generated by displacement synthesis when DNA polymerase encounters the 5'-end of a downstream Okazaki fragment. It enters the flap from the 5'-end and then tracks to cleave the flap base, leaving a nick for ligation. Also involved in the long patch base excision repair (LP-BER) pathway, by cleaving within the apurinic/apyrimidinic (AP) site-terminated flap. Acts as a genome stabilization factor that prevents flaps from equilibrating into structures that lead to duplications and deletions. Also possesses 5'-3' exonuclease activity on nicked or gapped double-stranded DNA, and exhibits RNase H activity. Also involved in replication and repair of rDNA and in repairing mitochondrial DNA. The sequence is that of Flap endonuclease 1 from Lodderomyces elongisporus (strain ATCC 11503 / CBS 2605 / JCM 1781 / NBRC 1676 / NRRL YB-4239) (Yeast).